Consider the following 202-residue polypeptide: Oligoribonuclease (202 aa).

The Exonuclease domain maps to 2–166 (LVWIDCEMTG…ADIQESIEEL (165 aa)). Y123 is an active-site residue.

The protein belongs to the oligoribonuclease family.

Its subcellular location is the cytoplasm. 3'-to-5' exoribonuclease specific for small oligoribonucleotides. The sequence is that of Oligoribonuclease from Cutibacterium acnes (strain DSM 16379 / KPA171202) (Propionibacterium acnes).